Consider the following 157-residue polypeptide: MKLSHLDEKNHPKMVDVSDKNITSRIATASGMIYMSQEAFDVIKNNTAKKGPVLQTAIIAAIMGAKKTSEIIPMCHPLMLSKVETNIVEFVKECAFKLIVTVKCEGKTGVEMEALSGVSIGLLTIYDMIKAIDKSMRITDIVLESKEGGKSGKFVRS.

Residues 74 to 76 (MCH) and 112 to 113 (ME) contribute to the substrate site. Aspartate 127 is an active-site residue.

Belongs to the MoaC family. Homohexamer; trimer of dimers.

It carries out the reaction (8S)-3',8-cyclo-7,8-dihydroguanosine 5'-triphosphate = cyclic pyranopterin phosphate + diphosphate. It participates in cofactor biosynthesis; molybdopterin biosynthesis. Catalyzes the conversion of (8S)-3',8-cyclo-7,8-dihydroguanosine 5'-triphosphate to cyclic pyranopterin monophosphate (cPMP). The chain is Cyclic pyranopterin monophosphate synthase from Campylobacter jejuni (strain RM1221).